Here is a 424-residue protein sequence, read N- to C-terminus: UPF0229 protein PFL_5654 (424 aa).

The disordered stretch occupies residues 85–108 (GEHIARPQGGGGGGGGRGKAGNSG). Gly residues predominate over residues 92-108 (QGGGGGGGGRGKAGNSG).

It belongs to the UPF0229 family.

The polypeptide is UPF0229 protein PFL_5654 (Pseudomonas fluorescens (strain ATCC BAA-477 / NRRL B-23932 / Pf-5)).